A 31-amino-acid chain; its full sequence is uncharacterized protein (31 aa).

A helical transmembrane segment spans residues T7–W29.

It is found in the cell inner membrane. This is an uncharacterized protein from Escherichia coli (strain K12).